Reading from the N-terminus, the 316-residue chain is Thymidylate synthase (316 aa).

DUMP contacts are provided by residues R23 and 178–179; that span reads RR. Catalysis depends on C198, which acts as the Nucleophile. DUMP is bound by residues 218–221, N229, and 259–261; these read RSGD and HIY. D221 provides a ligand contact to (6R)-5,10-methylene-5,6,7,8-tetrahydrofolate. A (6R)-5,10-methylene-5,6,7,8-tetrahydrofolate-binding site is contributed by A315.

Belongs to the thymidylate synthase family. Bacterial-type ThyA subfamily. In terms of assembly, homodimer.

It localises to the cytoplasm. The enzyme catalyses dUMP + (6R)-5,10-methylene-5,6,7,8-tetrahydrofolate = 7,8-dihydrofolate + dTMP. It functions in the pathway pyrimidine metabolism; dTTP biosynthesis. Catalyzes the reductive methylation of 2'-deoxyuridine-5'-monophosphate (dUMP) to 2'-deoxythymidine-5'-monophosphate (dTMP) while utilizing 5,10-methylenetetrahydrofolate (mTHF) as the methyl donor and reductant in the reaction, yielding dihydrofolate (DHF) as a by-product. This enzymatic reaction provides an intracellular de novo source of dTMP, an essential precursor for DNA biosynthesis. The sequence is that of Thymidylate synthase from Lactiplantibacillus plantarum (strain ATCC BAA-793 / NCIMB 8826 / WCFS1) (Lactobacillus plantarum).